A 231-amino-acid chain; its full sequence is MLDREGFRPNVGIILLNAHNEVFWGKRLREHSWQFPQGGIKYGETPVQAMYRELHEETGLLPEHVKVIGRTRDWLRYEVPDKFIKREVRGHYRGQKQIWFLLRMVGRDCDICLRATDHPEFDAWRWNEYWVPLDCVIEFKRDVYQLALTELSRFLRRPQPRTERPGGHHHGQRYPRMASSVNAPPGASMASSMTVTTVTTAIAVESTLRATIESDCSSTEDPAVQAPGLRD.

Positions 6–149 (GFRPNVGIIL…KRDVYQLALT (144 aa)) constitute a Nudix hydrolase domain. The Nudix box motif lies at 38–59 (GGIKYGETPVQAMYRELHEETG). Residues 157 to 190 (RPQPRTERPGGHHHGQRYPRMASSVNAPPGASMA) form a disordered region.

This sequence belongs to the Nudix hydrolase family. RppH subfamily. A divalent metal cation is required as a cofactor.

Functionally, accelerates the degradation of transcripts by removing pyrophosphate from the 5'-end of triphosphorylated RNA, leading to a more labile monophosphorylated state that can stimulate subsequent ribonuclease cleavage. This is RNA pyrophosphohydrolase from Paraburkholderia phymatum (strain DSM 17167 / CIP 108236 / LMG 21445 / STM815) (Burkholderia phymatum).